A 1520-amino-acid polypeptide reads, in one-letter code: Putative lipoprotein AcfD homolog (1520 aa).

Positions M1–G23 are cleaved as a signal peptide. Disordered regions lie at residues A22 to C107 and N226 to G247. C24 carries N-palmitoyl cysteine lipidation. The S-diacylglycerol cysteine moiety is linked to residue C24. Residues S31–T42 show a composition bias toward low complexity. The span at D51–E77 shows a compositional bias: pro residues. Residues G97–C107 are compositionally biased toward polar residues. Over residues S234–G247 the composition is skewed to low complexity. Residues G1081–E1381 form the Peptidase M60 domain. Residues D1498–E1520 form a disordered region.

It to V.cholerae AcfD (VC_0845).

The protein localises to the cell inner membrane. Involved in a type II secretion system (T2SS, formerly general secretion pathway, GSP) for the export of folded proteins across the outer membrane. This is Putative lipoprotein AcfD homolog (yghJ) from Escherichia coli (strain K12).